A 100-amino-acid polypeptide reads, in one-letter code: Large ribosomal subunit protein uL23 (100 aa).

The protein belongs to the universal ribosomal protein uL23 family. As to quaternary structure, part of the 50S ribosomal subunit. Contacts protein L29, and trigger factor when it is bound to the ribosome.

Functionally, one of the early assembly proteins it binds 23S rRNA. One of the proteins that surrounds the polypeptide exit tunnel on the outside of the ribosome. Forms the main docking site for trigger factor binding to the ribosome. This chain is Large ribosomal subunit protein uL23, found in Vibrio atlanticus (strain LGP32) (Vibrio splendidus (strain Mel32)).